Consider the following 155-residue polypeptide: Ribosomal RNA large subunit methyltransferase H (155 aa).

Residues Leu-72, Gly-103, and 122–127 (LSDLTL) contribute to the S-adenosyl-L-methionine site.

Belongs to the RNA methyltransferase RlmH family. Homodimer.

The protein resides in the cytoplasm. The enzyme catalyses pseudouridine(1915) in 23S rRNA + S-adenosyl-L-methionine = N(3)-methylpseudouridine(1915) in 23S rRNA + S-adenosyl-L-homocysteine + H(+). Functionally, specifically methylates the pseudouridine at position 1915 (m3Psi1915) in 23S rRNA. The chain is Ribosomal RNA large subunit methyltransferase H from Delftia acidovorans (strain DSM 14801 / SPH-1).